A 360-amino-acid polypeptide reads, in one-letter code: Tryptophan--tRNA ligase, mitochondrial (360 aa).

Residues glutamine 38 and 44 to 47 (HLGN) each bind ATP. Positions 39–47 (PTGIPHLGN) match the 'HIGH' region motif. Residue aspartate 168 coordinates L-tryptophan. Residues 180 to 182 (GED) and 229 to 233 (KMSKS) each bind ATP. A compositionally biased stretch (basic and acidic residues) spans 220-230 (IRSLREPEKKM). The interval 220 to 241 (IRSLREPEKKMSKSSGGPRSRI) is disordered. Positions 229-233 (KMSKS) match the 'KMSKS' region motif.

Belongs to the class-I aminoacyl-tRNA synthetase family.

It is found in the mitochondrion matrix. The enzyme catalyses tRNA(Trp) + L-tryptophan + ATP = L-tryptophyl-tRNA(Trp) + AMP + diphosphate + H(+). Functionally, catalyzes the attachment of tryptophan to tRNA(Trp). The chain is Tryptophan--tRNA ligase, mitochondrial from Caenorhabditis elegans.